A 117-amino-acid polypeptide reads, in one-letter code: Ribosome-binding factor A (117 aa).

The protein belongs to the RbfA family. As to quaternary structure, monomer. Binds 30S ribosomal subunits, but not 50S ribosomal subunits or 70S ribosomes.

The protein localises to the cytoplasm. In terms of biological role, one of several proteins that assist in the late maturation steps of the functional core of the 30S ribosomal subunit. Associates with free 30S ribosomal subunits (but not with 30S subunits that are part of 70S ribosomes or polysomes). Required for efficient processing of 16S rRNA. May interact with the 5'-terminal helix region of 16S rRNA. The chain is Ribosome-binding factor A from Leuconostoc citreum (strain KM20).